Here is a 147-residue protein sequence, read N- to C-terminus: Large ribosomal subunit protein bL9 (147 aa).

It belongs to the bacterial ribosomal protein bL9 family.

Functionally, binds to the 23S rRNA. The sequence is that of Large ribosomal subunit protein bL9 from Bacteroides fragilis (strain YCH46).